Here is a 646-residue protein sequence, read N- to C-terminus: Zinc finger protein 503 (646 aa).

The span at 1-11 shows a compositional bias: polar residues; that stretch reads MSTAPSLSALR. Residues 1–70 form a disordered region; sequence MSTAPSLSAL…PPSDPLRQAN (70 aa). The segment covering 16 to 28 has biased composition (gly residues); it reads SGGGGGGGGGGGA. Residues 34–52 show a composition bias toward low complexity; it reads SALSGNSSGPGPGSSPAGS. S102 is modified (phosphoserine). Positions 121 to 332 are disordered; sequence SQIGKPDPSP…PSAPTSSSVL (212 aa). The span at 130-139 shows a compositional bias: low complexity; the sequence is PSSKLSSVAS. Composition is skewed to gly residues over residues 140 to 152 and 189 to 205; these read NGGGAGGAGGGAA and GGGGGGGGGGGGGGGGV. N6-acetyllysine is present on K209. Residues 217 to 226 are compositionally biased toward polar residues; it reads ATCQPFTPRT. The segment covering 227–240 has biased composition (low complexity); that stretch reads GSPSSSASACSPGG. Phosphoserine is present on residues S231 and S237. Over residues 250–259 the composition is skewed to basic and acidic residues; the sequence is EGKDDKKDTD. Gly residues-rich tracts occupy residues 260–277 and 300–315; these read VGGGGKGTGGASAEGGPT and GGPGGKALGSDCGGSS. The segment covering 316–330 has biased composition (low complexity); sequence GSSSGSGPSAPTSSS. The C2H2-type zinc finger occupies 514-542; that stretch reads HICNWVSANGPCDKRFATSEELLSHLRTH. Residue R636 is modified to Omega-N-methylarginine.

It belongs to the Elbow/Noc family.

Its subcellular location is the nucleus. Its function is as follows. May function as a transcriptional repressor. The polypeptide is Zinc finger protein 503 (ZNF503) (Homo sapiens (Human)).